Here is a 983-residue protein sequence, read N- to C-terminus: MMKGYITLSFLIILIFNFLDEFAASTRHLCDPDQSDAILEFKNEFETLEESCFDSNIPLKTESWTNNSDCCYWDGIKCDAKFGDVIELDLSFSCLRGQLNSNSSLFRLPQLRFLTTLDLSNNDFIGQIPSSLETLSNLTTLDLSRNHFSGRIPSSIGNLSHLIFVDFSHNNFSGQIPSSLGYLSHLTSFNLSYNNFSGRVPSSIGNLSYLTTLRLSRNSFFGELPSSLGSLFHLTDLILDTNHFVGKIPSSLGNLSHLTSIDLHKNNFVGEIPFSLGNLSCLTSFILSDNNIVGEIPSSFGNLNQLDILNVKSNKLSGSFPIALLNLRKLSTLSLFNNRLTGTLPSNMSSLSNLKLFDATENHFTGPLPSSLFNIPSLKTITLENNQLNGSLGFGNISSYSNLTVLRLGNNNFRGPIHRSISKLVNLKELDLSNYNTQGLVDFTIFSHLKSIEYLNLSHLNTTTTIDMYEILSSFKLLDTLDLSGSHVSTTNKSSLSNSSLVLISQLYLSGCGITEFPKFLRSQELMLTLDISNNKIKGQVPGWLWMLPVLNYVNLSNNTFIGFERSTKLGLTSIQEPPAMRQLFCSNNNFTGNIPSFICELPYLSTLDFSNNKFNGSIPTCMGNIQSPYLQALNLRHNRLSGLLPENIFESLISLDVGHNQLVGKLPRSLSHISSLGLLNVESNKISDTFPLWLSSLQELQVLVLRSNAFYGPIEKTQFSKLRIIDISGNQFNGTLPANFFVNWTAMFSLDENEDQSNGETMSNMYMSTDYFYFDSMVLMNKGVEMELERVLKVFTVIDFSGNKFEGEIPKSIGLLKELHVLNLSNNALSGHIASSMGNLMALESLDVSQNKLSGEIPQELGKLTYLAYMNFSHNQLVGLLPGGTQFQTQKCSSFEDNHGLYGPSLEKICDIHGKTPQQSDMAPEPEEDEEEVISWIAAVIGFILGTALGLTFGCILFSYKPDWFKNPFVRDKRRNIGTITH.

The N-terminal stretch at 1 to 25 (MMKGYITLSFLIILIFNFLDEFAAS) is a signal peptide. Over 26–937 (TRHLCDPDQS…EEDEEEVISW (912 aa)) the chain is Extracellular. Asn-66 and Asn-102 each carry an N-linked (GlcNAc...) asparagine glycan. LRR repeat units follow at residues 82-108 (FGDV…LFRL), 111-135 (LRFL…LETL), 136-159 (SNLT…IGNL), 161-183 (HLIF…LGYL), 184-207 (SHLT…IGNL), 209-231 (YLTT…LGSL), 232-255 (FHLT…LGNL), 256-281 (SHLT…NLSC), 283-302 (TSFI…SFGN), 303-327 (LNQL…LLNL), 328-351 (RKLS…MSSL), 353-375 (NLKL…LFNI), 376-399 (PSLK…NISS), 401-424 (SNLT…ISKL), 425-448 (VNLK…IFSH), 450-474 (KSIE…ILSS), 475-498 (FKLL…SLSN), 501-524 (LVLI…LRSQ), 525-548 (ELML…LWML), 550-571 (VLNY…TKLG), 578-602 (PPAM…ICEL), 603-628 (PYLS…NIQS), 629-652 (PYLQ…IFES), 654-674 (ISLD…LSHI), 675-700 (SSLG…SLQE), 702-720 (QVLV…KTQF), 721-744 (SKLR…FFVN), 793-817 (LKVF…IGLL), 818-840 (KELH…SMGN), 841-865 (LMAL…LGKL), and 867-890 (YLAY…QFQT). N-linked (GlcNAc...) asparagine glycosylation is found at Asn-137, Asn-158, Asn-171, Asn-190, Asn-195, and Asn-206. 2 N-linked (GlcNAc...) asparagine glycosylation sites follow: Asn-254 and Asn-278. Residue Asn-347 is glycosylated (N-linked (GlcNAc...) asparagine). N-linked (GlcNAc...) asparagine glycans are attached at residues Asn-389, Asn-396, and Asn-402. Asn-456, Asn-461, Asn-492, and Asn-498 each carry an N-linked (GlcNAc...) asparagine glycan. 4 N-linked (GlcNAc...) asparagine glycosylation sites follow: Asn-555, Asn-558, Asn-590, and Asn-616. Residues Asn-734 and Asn-744 are each glycosylated (N-linked (GlcNAc...) asparagine). An N-linked (GlcNAc...) asparagine glycan is attached at Asn-824. Asn-872 is a glycosylation site (N-linked (GlcNAc...) asparagine). Residues 938-958 (IAAVIGFILGTALGLTFGCIL) form a helical membrane-spanning segment. The Cytoplasmic portion of the chain corresponds to 959–983 (FSYKPDWFKNPFVRDKRRNIGTITH).

Belongs to the RLP family.

The protein resides in the cell membrane. This is Receptor-like protein 19 from Arabidopsis thaliana (Mouse-ear cress).